A 171-amino-acid chain; its full sequence is Protein BTG1 (171 aa).

Phosphoserine is present on serine 159.

This sequence belongs to the BTG family. As to quaternary structure, interacts with CNOT7 and CNOT8.

Anti-proliferative protein. The sequence is that of Protein BTG1 (BTG1) from Bos taurus (Bovine).